A 563-amino-acid polypeptide reads, in one-letter code: Rhodopsin kinase GRK1 (563 aa).

The interval 1–15 (MDFGSLETVVANSAF) is interaction with RCVRN. An N-terminal region spans residues 1 to 189 (MDFGSLETVV…LEAQPMGEDW (189 aa)). A Phosphoserine modification is found at Ser-5. Thr-8 carries the phosphothreonine modification. Phosphoserine; by PKA and autocatalysis is present on Ser-21. The RGS domain occupies 58–175 (FESVCLEQPI…LGSLYFLRFL (118 aa)). One can recognise a Protein kinase domain in the interval 190–455 (FLDFRVLGKG…CDKLRAHPLF (266 aa)). Residues 196–204 (LGKGGFGEV) and Lys-219 contribute to the ATP site. Asp-317 (proton acceptor) is an active-site residue. The AGC-kinase C-terminal domain occupies 456–521 (KDLNWRQLEA…GNCPIPWQEE (66 aa)). Residues 456–563 (KDLNWRQLEA…SSKSGMCLVS (108 aa)) form a C-terminal region. A Phosphoserine; by autocatalysis modification is found at Ser-491. At Thr-492 the chain carries Phosphothreonine; by autocatalysis. The tract at residues 539–563 (QMPDDMKGISGGSSSSSKSGMCLVS) is disordered. Residues 550-563 (GSSSSSKSGMCLVS) are compositionally biased toward low complexity. At Cys-560 the chain carries Cysteine methyl ester. Residue Cys-560 is the site of S-farnesyl cysteine attachment. A propeptide spans 561-563 (LVS) (removed in mature form).

The protein belongs to the protein kinase superfamily. AGC Ser/Thr protein kinase family. GPRK subfamily. In terms of assembly, interacts (via N-terminus) with RCVRN (via C-terminus); the interaction is Ca(2+)-dependent. Interacts (when prenylated) with PDE6D; this promotes release from membranes. May form a complex composed of RHO, GRK1 and RCVRN in a Ca(2+)-dependent manner; RCVRN prevents the interaction between GRK1 and RHO. In terms of processing, autophosphorylated, Ser-21 is a minor site of autophosphorylation compared to Ser-491 and Thr-492. Phosphorylation at Ser-21 is regulated by light and activated by cAMP. Post-translationally, farnesylation is required for full activity. In terms of tissue distribution, retinal-specific. Expressed in rods and cones cells.

The protein resides in the membrane. It is found in the cell projection. The protein localises to the cilium. Its subcellular location is the photoreceptor outer segment. It catalyses the reaction L-threonyl-[rhodopsin] + ATP = O-phospho-L-threonyl-[rhodopsin] + ADP + H(+). The catalysed reaction is L-seryl-[rhodopsin] + ATP = O-phospho-L-seryl-[rhodopsin] + ADP + H(+). Its activity is regulated as follows. Inhibited by RCVRN, which prevents the interaction between GRK1 and RHO. Inhibition is calcium-dependent. Inhibited by phosphorylation of Ser-21. Functionally, retina-specific kinase involved in the signal turnoff via phosphorylation of rhodopsin (RHO), the G protein- coupled receptor that initiates the phototransduction cascade. This rapid desensitization is essential for scotopic vision and permits rapid adaptation to changes in illumination. May play a role in the maintenance of the outer nuclear layer in the retina. The polypeptide is Rhodopsin kinase GRK1 (Homo sapiens (Human)).